Consider the following 773-residue polypeptide: Cytochrome c oxidase subunit 1+2 (773 aa).

The interval 1–491 (MKLLEIYDKQ…LIASYGSLIT (491 aa)) is COX1. The helical transmembrane segment at 41 to 61 (TMYITFSIFAGIIGTLLSLVI) threads the bilayer. Glutamate 64 contributes to the Ca(2+) binding site. Position 85 (histidine 85) interacts with Fe(II)-heme a. 6 helical membrane-spanning segments follow: residues 87-111 (LIMI…NWFL), 130-150 (LWLI…GIGA), 173-193 (VGIL…INFL), 211-231 (LFVW…PVLA), 262-278 (LFHP…FGII), and 290-310 (IFGV…GFLV). A Cu cation-binding site is contributed by histidine 264. The 1'-histidyl-3'-tyrosine (His-Tyr) cross-link spans 264 to 268 (HPEVY). Tyrosine 268 is an O2 binding site. Histidine 314 and histidine 315 together coordinate Cu cation. 2 helical membrane-spanning segments follow: residues 335-355 (IIAI…WGGV) and 362-382 (MLFV…GVVL). Mg(2+) contacts are provided by histidine 392 and aspartate 393. A run of 5 helical transmembrane segments spans residues 396 to 416 (YVVA…IFAG), 444 to 464 (FWTM…LGLA), 483 to 503 (IASY…VNIF), 555 to 575 (IFFY…RILW), and 604 to 624 (GTVI…LIAI). Histidine 400 contributes to the heme a3 binding site. Fe(II)-heme a is bound at residue histidine 402. Residues 492–773 (AFGLLFFFVN…VQEYLGRLYK (282 aa)) are COX2. Positions 709, 744, 748, and 752 each coordinate Cu cation.

In the N-terminal section; belongs to the heme-copper respiratory oxidase family. The protein in the C-terminal section; belongs to the cytochrome c oxidase subunit 2 family. As to quaternary structure, component of the cytochrome c oxidase (complex IV, CIV), a multisubunit enzyme composed of a catalytic core of 3 subunits and several supernumerary subunits. The complex exists as a monomer or a dimer and forms supercomplexes (SCs) in the inner mitochondrial membrane with ubiquinol-cytochrome c oxidoreductase (cytochrome b-c1 complex, complex III, CIII). It depends on heme as a cofactor. Requires Cu cation as cofactor.

Its subcellular location is the mitochondrion inner membrane. The enzyme catalyses 4 Fe(II)-[cytochrome c] + O2 + 8 H(+)(in) = 4 Fe(III)-[cytochrome c] + 2 H2O + 4 H(+)(out). It functions in the pathway energy metabolism; oxidative phosphorylation. Its function is as follows. Component of the cytochrome c oxidase, the last enzyme in the mitochondrial electron transport chain which drives oxidative phosphorylation. The respiratory chain contains 3 multisubunit complexes succinate dehydrogenase (complex II, CII), ubiquinol-cytochrome c oxidoreductase (cytochrome b-c1 complex, complex III, CIII) and cytochrome c oxidase (complex IV, CIV), that cooperate to transfer electrons derived from NADH and succinate to molecular oxygen, creating an electrochemical gradient over the inner membrane that drives transmembrane transport and the ATP synthase. Cytochrome c oxidase is the component of the respiratory chain that catalyzes the reduction of oxygen to water. Electrons originating from reduced cytochrome c in the intermembrane space (IMS) are transferred via the dinuclear copper A center (CU(A)) of subunit 2 and heme A of subunit 1 to the active site in subunit 1, a binuclear center (BNC) formed by heme A3 and copper B (CU(B)). The BNC reduces molecular oxygen to 2 water molecules using 4 electrons from cytochrome c in the IMS and 4 protons from the mitochondrial matrix. This Dictyostelium citrinum (Slime mold) protein is Cytochrome c oxidase subunit 1+2 (cox1/2).